We begin with the raw amino-acid sequence, 360 residues long: Phospho-N-acetylmuramoyl-pentapeptide-transferase (360 aa).

10 helical membrane passes run 26–46 (AVLS…KMIL), 73–93 (TMGG…WGDL), 94–114 (SNPY…IGFV), 132–152 (WKYF…YMIG), 168–188 (IMPQ…VGTS), 199–219 (GLAI…AWAT), 239–259 (LVIF…FNTY), 263–283 (VFMG…IAVL), 288–308 (FLLV…ILQV), and 338–358 (VIIR…VTLK).

It belongs to the glycosyltransferase 4 family. MraY subfamily. Mg(2+) serves as cofactor.

The protein resides in the cell inner membrane. It catalyses the reaction UDP-N-acetyl-alpha-D-muramoyl-L-alanyl-gamma-D-glutamyl-meso-2,6-diaminopimeloyl-D-alanyl-D-alanine + di-trans,octa-cis-undecaprenyl phosphate = di-trans,octa-cis-undecaprenyl diphospho-N-acetyl-alpha-D-muramoyl-L-alanyl-D-glutamyl-meso-2,6-diaminopimeloyl-D-alanyl-D-alanine + UMP. Its pathway is cell wall biogenesis; peptidoglycan biosynthesis. Its function is as follows. Catalyzes the initial step of the lipid cycle reactions in the biosynthesis of the cell wall peptidoglycan: transfers peptidoglycan precursor phospho-MurNAc-pentapeptide from UDP-MurNAc-pentapeptide onto the lipid carrier undecaprenyl phosphate, yielding undecaprenyl-pyrophosphoryl-MurNAc-pentapeptide, known as lipid I. The polypeptide is Phospho-N-acetylmuramoyl-pentapeptide-transferase (Actinobacillus succinogenes (strain ATCC 55618 / DSM 22257 / CCUG 43843 / 130Z)).